The chain runs to 309 residues: Homoserine kinase (309 aa).

91-101 serves as a coordination point for ATP; sequence PIGSGLGSSAC.

The protein belongs to the GHMP kinase family. Homoserine kinase subfamily.

Its subcellular location is the cytoplasm. The catalysed reaction is L-homoserine + ATP = O-phospho-L-homoserine + ADP + H(+). It functions in the pathway amino-acid biosynthesis; L-threonine biosynthesis; L-threonine from L-aspartate: step 4/5. In terms of biological role, catalyzes the ATP-dependent phosphorylation of L-homoserine to L-homoserine phosphate. This chain is Homoserine kinase, found in Salmonella paratyphi B (strain ATCC BAA-1250 / SPB7).